A 403-amino-acid polypeptide reads, in one-letter code: S-adenosylmethionine synthase (403 aa).

His15 contacts ATP. Asp17 is a binding site for Mg(2+). Glu43 contacts K(+). Residues Glu56 and Gln99 each coordinate L-methionine. The segment at 99–109 (QSPDINQGVDR) is flexible loop. ATP-binding positions include 166-168 (DAK), 232-233 (KF), Asp241, 247-248 (RK), Ala264, and Lys268. Asp241 contributes to the L-methionine binding site. L-methionine is bound at residue Lys272.

The protein belongs to the AdoMet synthase family. As to quaternary structure, homotetramer; dimer of dimers. Requires Mg(2+) as cofactor. K(+) serves as cofactor.

The protein resides in the cytoplasm. The enzyme catalyses L-methionine + ATP + H2O = S-adenosyl-L-methionine + phosphate + diphosphate. It functions in the pathway amino-acid biosynthesis; S-adenosyl-L-methionine biosynthesis; S-adenosyl-L-methionine from L-methionine: step 1/1. In terms of biological role, catalyzes the formation of S-adenosylmethionine (AdoMet) from methionine and ATP. The overall synthetic reaction is composed of two sequential steps, AdoMet formation and the subsequent tripolyphosphate hydrolysis which occurs prior to release of AdoMet from the enzyme. This is S-adenosylmethionine synthase from Xanthomonas campestris pv. campestris (strain ATCC 33913 / DSM 3586 / NCPPB 528 / LMG 568 / P 25).